Here is a 775-residue protein sequence, read N- to C-terminus: Beta-galactosidase 7 (775 aa).

The N-terminal stretch at 1–17 (MRGGMAITAALVVVAAA) is a signal peptide. Glu185 functions as the Proton donor in the catalytic mechanism. Catalysis depends on Glu256, which acts as the Nucleophile. Asn257, Asn266, Asn277, Asn358, and Asn602 each carry an N-linked (GlcNAc...) asparagine glycan. In terms of domain architecture, SUEL-type lectin spans 689 to 775 (RGKVPKVRIW…KSLLVVADCR (87 aa)).

Belongs to the glycosyl hydrolase 35 family.

It localises to the secreted. The protein resides in the extracellular space. Its subcellular location is the apoplast. It catalyses the reaction Hydrolysis of terminal non-reducing beta-D-galactose residues in beta-D-galactosides.. The polypeptide is Beta-galactosidase 7 (Oryza sativa subsp. japonica (Rice)).